We begin with the raw amino-acid sequence, 400 residues long: MIIKPRVRGFICVTTHPVGCEANVKEQIDYVTSHGPIANGPKKVLVIGASTGYGLAARISAAFGSGADTLGVFFERAGSETKPGTAGWYNSAAFEKFAAEKGLYARSINGDAFSDKVKQVTIDTIKQDLGKVDLVVYSLAAPRRTHPKTGETISSTLKPVGKAVTFRGLDTDKEVIREVSLEPATQEEIDGTVAVMGGEDWQMWIDALDEAGVLADGAKTTAFTYLGEQITHDIYWNGSIGEAKKDLDKKVLSIRDKLAAHGGDARVSVLKAVVTQASSAIPMMPLYLSLLFKVMKETGTHEGCIEQVYGLLKDSLYGATPHVDEEGRLRADYKELDPQVQDKVVAMWDKVTNENLYEMTDFAGYKTEFLRLFGFEIAGVDYDADVNPDVKIPGIIDTTV.

Residues 48–53 (GASTGY), 74–75 (FE), 111–112 (DA), and 139–140 (LA) contribute to the NAD(+) site. Tyr225 contacts substrate. The Proton donor role is filled by Tyr235. Residues Lys244 and 273–275 (VVT) contribute to the NAD(+) site.

This sequence belongs to the TER reductase family. As to quaternary structure, monomer.

It catalyses the reaction a 2,3-saturated acyl-[ACP] + NAD(+) = a (2E)-enoyl-[ACP] + NADH + H(+). It participates in lipid metabolism; fatty acid biosynthesis. Its function is as follows. Involved in the final reduction of the elongation cycle of fatty acid synthesis (FAS II). Catalyzes the reduction of a carbon-carbon double bond in an enoyl moiety that is covalently linked to an acyl carrier protein (ACP). The protein is Enoyl-[acyl-carrier-protein] reductase [NADH] of Burkholderia cenocepacia (strain HI2424).